The primary structure comprises 66 residues: Large ribosomal subunit protein bL35 (66 aa).

It belongs to the bacterial ribosomal protein bL35 family.

This chain is Large ribosomal subunit protein bL35, found in Bradyrhizobium diazoefficiens (strain JCM 10833 / BCRC 13528 / IAM 13628 / NBRC 14792 / USDA 110).